The chain runs to 856 residues: Paladin (856 aa).

Over residues 1–16 the composition is skewed to low complexity; sequence MGTTASTAQQTVSAGT. The segment at 1–29 is disordered; sequence MGTTASTAQQTVSAGTPFEGLQGSGTMDS. Glycine 2 carries the N-myristoyl glycine lipid modification. Serine 86 carries the post-translational modification Phosphoserine.

The protein belongs to the paladin family. Expressed in endothelial cells, and in certain larger vessels, in mural cells. In the brain, possibly expressed in microglia. Expressed in peripheral blood mononuclear cells (at protein level).

It is found in the cytoplasm. It localises to the cytosol. This chain is Paladin (PALD1), found in Homo sapiens (Human).